Reading from the N-terminus, the 152-residue chain is Psoriasis susceptibility 1 candidate gene 1 protein homolog (152 aa).

Over residues M1 to P31 the composition is skewed to polar residues. 2 disordered regions span residues M1–P39 and A132–I152.

This is Psoriasis susceptibility 1 candidate gene 1 protein homolog (PSORS1C1) from Pan troglodytes (Chimpanzee).